We begin with the raw amino-acid sequence, 386 residues long: Succinate--CoA ligase [ADP-forming] subunit beta (386 aa).

In terms of domain architecture, ATP-grasp spans 9–244 (KEILHKFNVP…YDEEVKEEIE (236 aa)). Residues K46, 53–55 (GRG), E99, S102, and E107 each bind ATP. Mg(2+) is bound by residues N199 and D213. Residues N264 and 321–323 (GIM) contribute to the substrate site.

The protein belongs to the succinate/malate CoA ligase beta subunit family. As to quaternary structure, heterotetramer of two alpha and two beta subunits. Mg(2+) serves as cofactor.

It catalyses the reaction succinate + ATP + CoA = succinyl-CoA + ADP + phosphate. The catalysed reaction is GTP + succinate + CoA = succinyl-CoA + GDP + phosphate. The protein operates within carbohydrate metabolism; tricarboxylic acid cycle; succinate from succinyl-CoA (ligase route): step 1/1. Its function is as follows. Succinyl-CoA synthetase functions in the citric acid cycle (TCA), coupling the hydrolysis of succinyl-CoA to the synthesis of either ATP or GTP and thus represents the only step of substrate-level phosphorylation in the TCA. The beta subunit provides nucleotide specificity of the enzyme and binds the substrate succinate, while the binding sites for coenzyme A and phosphate are found in the alpha subunit. The polypeptide is Succinate--CoA ligase [ADP-forming] subunit beta (Wolbachia sp. subsp. Brugia malayi (strain TRS)).